We begin with the raw amino-acid sequence, 573 residues long: Isocitrate dehydrogenase kinase/phosphatase (573 aa).

Residues 315-321 and lysine 336 each bind ATP; that span reads APGIRGM. Residue aspartate 371 is part of the active site.

Belongs to the AceK family.

Its subcellular location is the cytoplasm. It carries out the reaction L-seryl-[isocitrate dehydrogenase] + ATP = O-phospho-L-seryl-[isocitrate dehydrogenase] + ADP + H(+). Bifunctional enzyme which can phosphorylate or dephosphorylate isocitrate dehydrogenase (IDH) on a specific serine residue. This is a regulatory mechanism which enables bacteria to bypass the Krebs cycle via the glyoxylate shunt in response to the source of carbon. When bacteria are grown on glucose, IDH is fully active and unphosphorylated, but when grown on acetate or ethanol, the activity of IDH declines drastically concomitant with its phosphorylation. This is Isocitrate dehydrogenase kinase/phosphatase from Enterobacter sp. (strain 638).